Here is a 461-residue protein sequence, read N- to C-terminus: GTPase Era, mitochondrial (461 aa).

The N-terminal 35 residues, 1–35 (MAAPWLQRWRGAYAGPSGPLRLVRLHGVQRSSWRA), are a transit peptide targeting the mitochondrion. The disordered stretch occupies residues 39 to 73 (AAGAFGAGPHPGPPQRAANPGPGPHPPPVATSREK). Residues 89–354 (KVLRISIIGA…QYLLMQAKPG (266 aa)) enclose the Era-type G domain. Residues 97–104 (GAPNSGKS) are G1. Residue 97 to 104 (GAPNSGKS) coordinates GTP. The tract at residues 123-127 (HTTRC) is G2. The segment at 144-147 (DTPG) is G3. Residues 144 to 148 (DTPGL) and 213 to 216 (NKVD) contribute to the GTP site. The tract at residues 213–216 (NKVD) is G4. The interval 260–319 (KVTQTPPPENRARESPCQLETDKAQEGSSLDNSSDVKASESSLDTEAREQKPYKYGDQKN) is disordered. Positions 269-284 (NRARESPCQLETDKAQ) are enriched in basic and acidic residues. A compositionally biased stretch (polar residues) spans 285-303 (EGSSLDNSSDVKASESSLD). Residues 304 to 319 (TEAREQKPYKYGDQKN) are compositionally biased toward basic and acidic residues. Positions 332 to 334 (LAA) are G5. The KH type-2 domain maps to 380–461 (ILEYLPLEVP…RLKLKVEVKS (82 aa)).

Belongs to the TRAFAC class TrmE-Era-EngA-EngB-Septin-like GTPase superfamily. Era GTPase family.

It localises to the mitochondrion matrix. It is found in the mitochondrion inner membrane. Probable GTPase that plays a role in the mitochondrial ribosomal small subunit assembly. Specifically binds the 12S mitochondrial rRNA (12S mt-rRNA) to a 33 nucleotide section delineating the 3' terminal stem-loop region. May act as a chaperone that protects the 12S mt-rRNA on the 28S mitoribosomal subunit during ribosomal small subunit assembly. The protein is GTPase Era, mitochondrial (ERAL1) of Gallus gallus (Chicken).